A 324-amino-acid chain; its full sequence is tRNA-modifying protein YgfZ (324 aa).

A folate-binding site is contributed by Trp186.

Belongs to the tRNA-modifying YgfZ family.

Its subcellular location is the cytoplasm. Folate-binding protein involved in regulating the level of ATP-DnaA and in the modification of some tRNAs. It is probably a key factor in regulatory networks that act via tRNA modification, such as initiation of chromosomal replication. This chain is tRNA-modifying protein YgfZ, found in Colwellia psychrerythraea (strain 34H / ATCC BAA-681) (Vibrio psychroerythus).